A 382-amino-acid polypeptide reads, in one-letter code: Galactokinase (382 aa).

34 to 37 (EHTD) is a binding site for substrate. 124–130 (GAGLSSS) serves as a coordination point for ATP. Ser130 and Glu162 together coordinate Mg(2+). The active-site Proton acceptor is Asp174. Tyr223 contacts substrate.

Belongs to the GHMP kinase family. GalK subfamily.

It is found in the cytoplasm. The catalysed reaction is alpha-D-galactose + ATP = alpha-D-galactose 1-phosphate + ADP + H(+). Its pathway is carbohydrate metabolism; galactose metabolism. Catalyzes the transfer of the gamma-phosphate of ATP to D-galactose to form alpha-D-galactose-1-phosphate (Gal-1-P). This chain is Galactokinase, found in Escherichia coli O81 (strain ED1a).